The following is a 324-amino-acid chain: D-alanine--D-alanine ligase (324 aa).

Positions lysine 116–alanine 311 constitute an ATP-grasp domain. Alanine 142–threonine 197 is a binding site for ATP. Positions 265, 278, and 280 each coordinate Mg(2+).

This sequence belongs to the D-alanine--D-alanine ligase family. Mg(2+) serves as cofactor. It depends on Mn(2+) as a cofactor.

The protein resides in the cytoplasm. It catalyses the reaction 2 D-alanine + ATP = D-alanyl-D-alanine + ADP + phosphate + H(+). The protein operates within cell wall biogenesis; peptidoglycan biosynthesis. Cell wall formation. The chain is D-alanine--D-alanine ligase from Pseudomonas fluorescens (strain Pf0-1).